A 527-amino-acid chain; its full sequence is MSALLREKFGREVILEKPRDRSFGHFATPIAFALAKELKQSPMKIADEIASSFEDNNIFSRVESVKGYLNFRLSENFLSEYGSWALENPQTFAKQEKKEKILLEFVSANPTGPLHIGHARGAVYGDTLFRLARHLGYDITAEYYVNDAGNQIDLLGLSIQLYGRENILHESVKYPESYYRGEYLAPLAHEAIKKFGLEILSDESRQKELALWAKDGVMEIIKKDLANTNIFFDTFVYESTLYDDWDRVMAKMGDGIYKKDDKLFIASSLKGDDDDRVVVREDARPTYLAGDIVYHNQKFERGYDHYINIWGADHHGYIARVKASVEFLGYDSAKLEVLLSQMVSLLKDGEPYKMSKRAGNVILMSDIVEEIGSDALRFIFASKKSDTALEFDLAEFKKQDSSNPIFYIQYAHARIKTIIAKSDLSHDEIMSATLKNLDESADMLMFDALLLPEIVEDAFISRQVQKLPEYLKSLAASLHKFYYDCRIIGTADEAKLLKLLMLVGLSLKTGLALMGIEAKDYMSKEEE.

The short motif at 108 to 118 is the 'HIGH' region element; the sequence is ANPTGPLHIGH.

Belongs to the class-I aminoacyl-tRNA synthetase family. In terms of assembly, monomer.

It is found in the cytoplasm. It catalyses the reaction tRNA(Arg) + L-arginine + ATP = L-arginyl-tRNA(Arg) + AMP + diphosphate. This chain is Arginine--tRNA ligase, found in Sulfurimonas denitrificans (strain ATCC 33889 / DSM 1251) (Thiomicrospira denitrificans (strain ATCC 33889 / DSM 1251)).